We begin with the raw amino-acid sequence, 635 residues long: MERWSINDSAKIYNLPNWGADLFSINKKGNVCVHPSPTSKHSIDLRALVDDLIKRKIKPPILLRFMDVLQGRIAAINRAFKYAIDENDYPSTYQTFYPIKVNQQRQVVEAIAKFGKRYNIGIEVGSKPELVIGISFATGNGIPIICNGYKDKEYIETVLYATKIGYDITIVVEKMFELEKIIALSKKTGIKPKLGIRVKLSSKGTGKWATSGGEDAKFGLRMSEIIAAIGLLEQNELLDSVKLIHFHIGSQITKIDKIKSALIEGTRVYAEMRKLGVGIEYVDIGGGLGVDYDGSKSSYFSSVNYSIEEYANDVIYQIKNICEDAGVECPNIISESGRATAAHYSVLVTNLLNTNTQNLMPDFEETLNGAEKLAPTVKKLVDIYKSIDRYSLREDYHDTVQLIQEAVSLFSLGYLTLAERAMAEWLHGKILRKINGIVEKIKPIPEELQNFQLSLRQTYFANFSLFQSIPDSWAIDQLFPIVPIQRLNQKPDVMASIADITCDSDGEITSFVGENGRTKYLPLHKIRKDEDYFVGFFLIGAYQEILGDMHNLFGDTNAVHVTFNKKTGYKIDTVINGDATWESLKYVQYKGPEILKHVRDTMEKDVALRKVSIEESSHFLELLDRTLLGYTYLGE.

An N6-(pyridoxal phosphate)lysine modification is found at K100. 282–292 lines the substrate pocket; it reads VDIGGGLGVDY.

The protein belongs to the Orn/Lys/Arg decarboxylase class-II family. SpeA subfamily. It depends on Mg(2+) as a cofactor. Pyridoxal 5'-phosphate serves as cofactor.

The enzyme catalyses L-arginine + H(+) = agmatine + CO2. It functions in the pathway amine and polyamine biosynthesis; agmatine biosynthesis; agmatine from L-arginine: step 1/1. Functionally, catalyzes the biosynthesis of agmatine from arginine. The chain is Biosynthetic arginine decarboxylase from Geobacter metallireducens (strain ATCC 53774 / DSM 7210 / GS-15).